Reading from the N-terminus, the 171-residue chain is AASPQKRAASPRKSPKKSPRKSPKKKSPRKRKARSAAHPPVIDMITAAIAAQKERRGSSVAKIQSYIAAKYRCDINALNPHIRRALKNQVKSGALKQVSGVGATGRFRVGAVKRSAASANKLKATREKARARAKAKKAKAAARRKAAAAKRKAAAAKRRAAKKARKAKAKP.

2 disordered regions span residues 1–40 and 133–171; these read AASP…AHPP and AKAK…KAKP. The segment covering 9–35 has biased composition (basic residues); that stretch reads ASPRKSPKKSPRKSPKKKSPRKRKARS. The H15 domain occupies 37 to 111; the sequence is AHPPVIDMIT…GATGRFRVGA (75 aa).

It belongs to the histone H1/H5 family. Sperm.

Its subcellular location is the nucleus. It localises to the chromosome. Histones H1 are necessary for the condensation of nucleosome chains into higher-order structures. The protein is Histone H1, gonadal of Echinolampas crassa (Sea urchin).